The following is a 147-amino-acid chain: Probable cytidine deaminase (147 aa).

The region spanning 4-130 is the CMP/dCMP-type deaminase domain; sequence EELEKCIDAA…KLLPGLFSQE (127 aa). Residue 45–51 participates in substrate binding; that stretch reads NVENSSY. Cys-56 contributes to the Zn(2+) binding site. The Proton donor role is filled by Glu-58. 2 residues coordinate Zn(2+): Cys-90 and Cys-93.

It belongs to the cytidine and deoxycytidylate deaminase family. It depends on Zn(2+) as a cofactor.

The catalysed reaction is cytidine + H2O + H(+) = uridine + NH4(+). It carries out the reaction 2'-deoxycytidine + H2O + H(+) = 2'-deoxyuridine + NH4(+). In terms of biological role, this enzyme scavenges exogenous and endogenous cytidine and 2'-deoxycytidine for UMP synthesis. This Dictyostelium discoideum (Social amoeba) protein is Probable cytidine deaminase (cda).